Reading from the N-terminus, the 99-residue chain is Bacterial microcompartment protein homohexamer (99 aa).

One can recognise a BMC domain in the interval 4-88 (ALGMIEVRGF…PHVNVDAALP (85 aa)).

The protein belongs to the bacterial microcompartments protein family. As to quaternary structure, homohexamer with a small central pore. When purified protein is examined by atomic force microscopy it dynamically makes uniform patches about 35 Angstroms thick with hexamers in the same orientation. In the BMC the concave side faces outward, with the N- and C-terminii exposed to the cytoplasm.

It is found in the bacterial microcompartment. In terms of biological role, the only hexameric shell protein in this bacterium, it forms the majority of the bacterial microcompartment (BMC) shell. Expression of 5 proteins in E.coli (BMC-H (Hoch_5815), BMC-P (Hoch_5814), and 3 BMC-T (Hoch_5812, Hoch_5816, Hoch_3341)) forms a 40 nm artificial BMC with a molecular mass of 6.5 MDa. There are 60 BMC-H hexamers per BMC. The shell facets are 20-30 Angstroms thick (a single hexamer layer), with 1 of BMC-T trimers protruding to the exterior. This chain is Bacterial microcompartment protein homohexamer, found in Haliangium ochraceum (strain DSM 14365 / JCM 11303 / SMP-2).